Consider the following 366-residue polypeptide: Terpene cyclase atmA (366 aa).

A run of 8 helical transmembrane segments spans residues 9–29 (FLLL…NNGF), 84–104 (LTGL…VVHI), 113–133 (GMVI…GIVI), 162–182 (GLVV…SLPA), 195–215 (IAAW…HHLF), 233–253 (VYHF…SAFV), 291–311 (AGLF…TMVW), and 333–353 (ILRL…VRLI).

It belongs to the membrane-bound ascI terpene cyclase family.

The protein localises to the membrane. Aflatrem synthesis protein A; part of the ATM2 gene cluster that mediates the biosynthesis of aflatrem, a tremorgenic mycotoxin with acute neurotoxic effects. Synthesis of geranylgeranyl diphosphate (GGPP) by AtmG (a GGPP synthase) precedes condensation of GGPP with indole 3-glycerol phosphate, followed by epoxidation and cyclization by AtmM (a FAD-dependent monooxygenase) and AtmC (a prenyltransferase) to produce paspaline. AtmB is also essential for paspaline production, but its exact role has not been identified yet. AtmP, a cytochrome P450 monooxygenase, subsequently converts paspaline to 13-desoxypaxilline via PC-M6 by removal of the C-30 methyl group and oxidation at C-10. AtmQ, a cytochrome P450 monooxygenase, then catalyzes the oxidation of 13-desoxypaxilline, first at C-7 to produce paspalicine and then at C-13 to form paspalinine. Finally, AtmD prenylates paspalinine to form aflatrem. The role of atmA in the aflatrem biosynthesis is still unknown. The protein is Terpene cyclase atmA of Aspergillus flavus.